A 277-amino-acid polypeptide reads, in one-letter code: Hemin import ATP-binding protein HmuV (277 aa).

Residues 25-260 (IHAQGLNLIL…DIIERVYGWP (236 aa)) enclose the ABC transporter domain. 57 to 64 (GPNGAGKS) provides a ligand contact to ATP.

This sequence belongs to the ABC transporter superfamily. Heme (hemin) importer (TC 3.A.1.14.5) family. In terms of assembly, the complex is composed of two ATP-binding proteins (HmuV), two transmembrane proteins (HmuU) and a solute-binding protein (HmuT).

The protein resides in the cell inner membrane. Functionally, part of the ABC transporter complex HmuTUV involved in hemin import. Responsible for energy coupling to the transport system. The chain is Hemin import ATP-binding protein HmuV from Photobacterium profundum (strain SS9).